Reading from the N-terminus, the 255-residue chain is UPF0246 protein BVU_0413 (255 aa).

It belongs to the UPF0246 family.

This Phocaeicola vulgatus (strain ATCC 8482 / DSM 1447 / JCM 5826 / CCUG 4940 / NBRC 14291 / NCTC 11154) (Bacteroides vulgatus) protein is UPF0246 protein BVU_0413.